A 149-amino-acid polypeptide reads, in one-letter code: MRAVVQRVSEAKVIVEEKTVGAIKRGLLVFVGVGKDDTEEDCEWLADKVSGLRIFEDEDGKMNLSVKDINGEVLVVSQFTLYGDCRRGKRPSFTEAAPPDKGKALYERFVELLREKGLKVETGKFRAHMHVHLVNDGPVTILLDSSKLF.

Positions 137–138 (GP) match the Gly-cisPro motif, important for rejection of L-amino acids motif.

The protein belongs to the DTD family. In terms of assembly, homodimer.

The protein localises to the cytoplasm. It carries out the reaction glycyl-tRNA(Ala) + H2O = tRNA(Ala) + glycine + H(+). The catalysed reaction is a D-aminoacyl-tRNA + H2O = a tRNA + a D-alpha-amino acid + H(+). In terms of biological role, an aminoacyl-tRNA editing enzyme that deacylates mischarged D-aminoacyl-tRNAs. Also deacylates mischarged glycyl-tRNA(Ala), protecting cells against glycine mischarging by AlaRS. Acts via tRNA-based rather than protein-based catalysis; rejects L-amino acids rather than detecting D-amino acids in the active site. By recycling D-aminoacyl-tRNA to D-amino acids and free tRNA molecules, this enzyme counteracts the toxicity associated with the formation of D-aminoacyl-tRNA entities in vivo and helps enforce protein L-homochirality. This chain is D-aminoacyl-tRNA deacylase, found in Thermotoga petrophila (strain ATCC BAA-488 / DSM 13995 / JCM 10881 / RKU-1).